A 401-amino-acid polypeptide reads, in one-letter code: Probable tRNA sulfurtransferase (401 aa).

The region spanning 60–165 (EPIIDKLKTV…QDGTYVTCHD (106 aa)) is the THUMP domain. ATP is bound by residues 183–184 (ML), 208–209 (HF), R265, G287, and Q296.

Belongs to the ThiI family.

It is found in the cytoplasm. The catalysed reaction is [ThiI sulfur-carrier protein]-S-sulfanyl-L-cysteine + a uridine in tRNA + 2 reduced [2Fe-2S]-[ferredoxin] + ATP + H(+) = [ThiI sulfur-carrier protein]-L-cysteine + a 4-thiouridine in tRNA + 2 oxidized [2Fe-2S]-[ferredoxin] + AMP + diphosphate. It catalyses the reaction [ThiS sulfur-carrier protein]-C-terminal Gly-Gly-AMP + S-sulfanyl-L-cysteinyl-[cysteine desulfurase] + AH2 = [ThiS sulfur-carrier protein]-C-terminal-Gly-aminoethanethioate + L-cysteinyl-[cysteine desulfurase] + A + AMP + 2 H(+). It participates in cofactor biosynthesis; thiamine diphosphate biosynthesis. Functionally, catalyzes the ATP-dependent transfer of a sulfur to tRNA to produce 4-thiouridine in position 8 of tRNAs, which functions as a near-UV photosensor. Also catalyzes the transfer of sulfur to the sulfur carrier protein ThiS, forming ThiS-thiocarboxylate. This is a step in the synthesis of thiazole, in the thiamine biosynthesis pathway. The sulfur is donated as persulfide by IscS. The protein is Probable tRNA sulfurtransferase of Geobacillus thermodenitrificans (strain NG80-2).